The primary structure comprises 520 residues: CUGBP Elav-like family member 4 (520 aa).

3 RRM domains span residues 47 to 128 (IKLF…PADS), 135 to 215 (RKLF…FADT), and 435 to 513 (CNLF…LKRP).

Belongs to the CELF/BRUNOL family.

It is found in the nucleus. It localises to the cytoplasm. In terms of biological role, RNA-binding protein that may be implicated in the regulation of pre-mRNA alternative splicing. This chain is CUGBP Elav-like family member 4 (celf4), found in Danio rerio (Zebrafish).